Here is a 153-residue protein sequence, read N- to C-terminus: Allergen Pet c 1 (153 aa).

Belongs to the BetVI family. In terms of assembly, may form dimers.

The sequence is that of Allergen Pet c 1 from Petroselinum crispum (Parsley).